The primary structure comprises 400 residues: Chalcone synthase C2 (400 aa).

Residue Cys-168 is part of the active site.

It belongs to the thiolase-like superfamily. Chalcone/stilbene synthases family.

The catalysed reaction is (E)-4-coumaroyl-CoA + 3 malonyl-CoA + 3 H(+) = 2',4,4',6'-tetrahydroxychalcone + 3 CO2 + 4 CoA. Its pathway is secondary metabolite biosynthesis; flavonoid biosynthesis. In terms of biological role, the primary product of this enzyme is 4,2',4',6'-tetrahydroxychalcone (also termed naringenin-chalcone or chalcone) which can under specific conditions spontaneously isomerize into naringenin. In Zea mays (Maize), this protein is Chalcone synthase C2 (C2).